The sequence spans 316 residues: 4-hydroxy-3-methylbut-2-enyl diphosphate reductase (316 aa).

Residue Cys12 participates in [4Fe-4S] cluster binding. Residues His41 and His74 each contribute to the (2E)-4-hydroxy-3-methylbut-2-enyl diphosphate site. Positions 41 and 74 each coordinate dimethylallyl diphosphate. Residues His41 and His74 each coordinate isopentenyl diphosphate. Residue Cys96 participates in [4Fe-4S] cluster binding. His124 is a binding site for (2E)-4-hydroxy-3-methylbut-2-enyl diphosphate. Residue His124 coordinates dimethylallyl diphosphate. His124 serves as a coordination point for isopentenyl diphosphate. The active-site Proton donor is Glu126. Residue Thr167 participates in (2E)-4-hydroxy-3-methylbut-2-enyl diphosphate binding. [4Fe-4S] cluster is bound at residue Cys197. Ser225, Ser226, Asn227, and Ser269 together coordinate (2E)-4-hydroxy-3-methylbut-2-enyl diphosphate. Positions 225, 226, 227, and 269 each coordinate dimethylallyl diphosphate. Isopentenyl diphosphate contacts are provided by Ser225, Ser226, Asn227, and Ser269.

This sequence belongs to the IspH family. Homodimer. It depends on [4Fe-4S] cluster as a cofactor.

The catalysed reaction is isopentenyl diphosphate + 2 oxidized [2Fe-2S]-[ferredoxin] + H2O = (2E)-4-hydroxy-3-methylbut-2-enyl diphosphate + 2 reduced [2Fe-2S]-[ferredoxin] + 2 H(+). It catalyses the reaction dimethylallyl diphosphate + 2 oxidized [2Fe-2S]-[ferredoxin] + H2O = (2E)-4-hydroxy-3-methylbut-2-enyl diphosphate + 2 reduced [2Fe-2S]-[ferredoxin] + 2 H(+). It functions in the pathway isoprenoid biosynthesis; dimethylallyl diphosphate biosynthesis; dimethylallyl diphosphate from (2E)-4-hydroxy-3-methylbutenyl diphosphate: step 1/1. Its pathway is isoprenoid biosynthesis; isopentenyl diphosphate biosynthesis via DXP pathway; isopentenyl diphosphate from 1-deoxy-D-xylulose 5-phosphate: step 6/6. Functionally, catalyzes the conversion of 1-hydroxy-2-methyl-2-(E)-butenyl 4-diphosphate (HMBPP) into a mixture of isopentenyl diphosphate (IPP) and dimethylallyl diphosphate (DMAPP). Acts in the terminal step of the DOXP/MEP pathway for isoprenoid precursor biosynthesis. In Enterobacter sp. (strain 638), this protein is 4-hydroxy-3-methylbut-2-enyl diphosphate reductase.